The chain runs to 358 residues: Golgi-resident adenosine 3',5'-bisphosphate 3'-phosphatase (358 aa).

Met-1 is modified (N-acetylmethionine). Topologically, residues 1-12 (MAPMGIRLSPLG) are cytoplasmic. A helical membrane pass occupies residues 13–33 (VAVFCLLGLGVLYHLYSGFLA). At 34-358 (GRFSLFGLGG…KLPDLEKMGH (325 aa)) the chain is on the lumenal side. The disordered stretch occupies residues 85 to 106 (RESNVLHEKSKGKTREGADDKM). Catalysis depends on Asp-110, which acts as the Proton acceptor. Residues Glu-133, Asp-174, Leu-176, and Asp-177 each coordinate Mg(2+). Thr-179 acts as the Proton acceptor in catalysis. Residues Ser-242 and His-245 each contribute to the AMP site. N-linked (GlcNAc...) asparagine glycosylation occurs at Asn-259. Residues Gly-268 and Lys-272 each coordinate AMP. Residue Asp-300 participates in Mg(2+) binding.

The protein belongs to the inositol monophosphatase superfamily. The cofactor is Mg(2+). Post-translationally, contains N-linked glycan resistant to endoglycosydase H.

The protein localises to the golgi apparatus. The protein resides in the trans-Golgi network membrane. It catalyses the reaction adenosine 3',5'-bisphosphate + H2O = AMP + phosphate. It functions in the pathway sulfur metabolism. Strongly inhibited by lithium. Functionally, exhibits 3'-nucleotidase activity toward adenosine 3',5'-bisphosphate (PAP), namely hydrolyzes adenosine 3',5'-bisphosphate into adenosine 5'-monophosphate (AMP) and a phosphate. May play a role in the formation of skeletal elements derived through endochondral ossification, possibly by clearing adenosine 3',5'-bisphosphate produced by Golgi sulfotransferases during glycosaminoglycan sulfation. Has no activity toward 3'-phosphoadenosine 5'-phosphosulfate (PAPS) or inositol phosphate (IP) substrates including I(1)P, I(1,4)P2, I(1,3,4)P3, I(1,4,5)P3 and I(1,3,4,5)P4. The chain is Golgi-resident adenosine 3',5'-bisphosphate 3'-phosphatase (BPNT2) from Callithrix jacchus (White-tufted-ear marmoset).